The primary structure comprises 347 residues: GTPase Obg (347 aa).

One can recognise an Obg domain in the interval 1–158; it reads MFIDNVKLVL…LSVRLELKLI (158 aa). Residues 159 to 339 enclose the OBG-type G domain; the sequence is ADVGLVGFPN…LKFMLLEEVK (181 aa). GTP contacts are provided by residues 165–172, 190–194, 212–215, 280–283, and 320–322; these read GFPNVGKS, FTTLT, DIPG, SKSD, and SSL. Mg(2+)-binding residues include Ser-172 and Thr-192.

Belongs to the TRAFAC class OBG-HflX-like GTPase superfamily. OBG GTPase family. As to quaternary structure, monomer. Mg(2+) is required as a cofactor.

The protein resides in the cytoplasm. An essential GTPase which binds GTP, GDP and possibly (p)ppGpp with moderate affinity, with high nucleotide exchange rates and a fairly low GTP hydrolysis rate. Plays a role in control of the cell cycle, stress response, ribosome biogenesis and in those bacteria that undergo differentiation, in morphogenesis control. The sequence is that of GTPase Obg from Campylobacter lari (strain RM2100 / D67 / ATCC BAA-1060).